The chain runs to 246 residues: Putative carboxymethylenebutenolidase (246 aa).

Residues Cys-127, Asp-183, and His-215 contribute to the active site.

Belongs to the dienelactone hydrolase family.

It catalyses the reaction 2-(5-oxo-2,5-dihydrofuran-2-ylidene)acetate + H2O = 4-oxohex-2-enedioate + H(+). This Synechocystis sp. (strain ATCC 27184 / PCC 6803 / Kazusa) protein is Putative carboxymethylenebutenolidase.